The following is a 186-amino-acid chain: dCTP deaminase (186 aa).

DCTP is bound at residue 107-112 (KSTYAR). The Proton donor/acceptor role is filled by E133. Positions 152, 166, and 176 each coordinate dCTP.

It belongs to the dCTP deaminase family. Homotrimer.

It carries out the reaction dCTP + H2O + H(+) = dUTP + NH4(+). It functions in the pathway pyrimidine metabolism; dUMP biosynthesis; dUMP from dCTP (dUTP route): step 1/2. In terms of biological role, catalyzes the deamination of dCTP to dUTP. This chain is dCTP deaminase, found in Campylobacter lari (strain RM2100 / D67 / ATCC BAA-1060).